The chain runs to 344 residues: uncharacterized protein (344 aa).

The Cytoplasmic segment spans residues 1-98 (MIDFVKSRDT…NNDEIGIWNY (98 aa)). Residues 99–119 (ISVAEMGGVLLFLSYWIWTCL) traverse the membrane as a helical segment. A topological domain (lumenal) is located at residue histidine 120. A helical membrane pass occupies residues 121 to 141 (FSKIIFPAQKVICLYIFLFAL). The Cytoplasmic segment spans residues 142–169 (NQTLQECIEEYVFSSECIKYRQFYSVYE). A helical membrane pass occupies residues 170-192 (IIDFLRTNFYRLFVIYCALGFGI). Topologically, residues 193 to 198 (TRTVPK) are lumenal. A helical membrane pass occupies residues 199–219 (YLMIKGISIVIALCSVYWISL). At 220–222 (YKD) the chain is on the cytoplasmic side. A helical transmembrane segment spans residues 223–243 (VYVVSEIFDMIQYEVFPAIWV). Residues 244 to 273 (YSICHLLKQCTSVTTYENASKARFFRRMLN) lie on the Lumenal side of the membrane. Residues 274–294 (AFIFIFCASPMLHYLSNIIFG) traverse the membrane as a helical segment. The Cytoplasmic portion of the chain corresponds to 295 to 344 (NFDYRLSVIIGDLFTFMEKIAFPCYIMFPTHNEALAYNRNVAEEAQEKMI).

It localises to the endoplasmic reticulum membrane. This is an uncharacterized protein from Schizosaccharomyces pombe (strain 972 / ATCC 24843) (Fission yeast).